The primary structure comprises 270 residues: Formamidopyrimidine-DNA glycosylase (270 aa).

Pro-2 (schiff-base intermediate with DNA) is an active-site residue. Glu-3 serves as the catalytic Proton donor. The Proton donor; for beta-elimination activity role is filled by Lys-58. His-91, Arg-110, and Arg-151 together coordinate DNA. The FPG-type zinc finger occupies 236-270 (FAYGRAGEFCKVCGTTLREVKLGQRASVYCPRCQR). Arg-260 functions as the Proton donor; for delta-elimination activity in the catalytic mechanism.

The protein belongs to the FPG family. As to quaternary structure, monomer. Requires Zn(2+) as cofactor.

The enzyme catalyses Hydrolysis of DNA containing ring-opened 7-methylguanine residues, releasing 2,6-diamino-4-hydroxy-5-(N-methyl)formamidopyrimidine.. The catalysed reaction is 2'-deoxyribonucleotide-(2'-deoxyribose 5'-phosphate)-2'-deoxyribonucleotide-DNA = a 3'-end 2'-deoxyribonucleotide-(2,3-dehydro-2,3-deoxyribose 5'-phosphate)-DNA + a 5'-end 5'-phospho-2'-deoxyribonucleoside-DNA + H(+). In terms of biological role, involved in base excision repair of DNA damaged by oxidation or by mutagenic agents. Acts as a DNA glycosylase that recognizes and removes damaged bases. Has a preference for oxidized purines, such as 7,8-dihydro-8-oxoguanine (8-oxoG). Has AP (apurinic/apyrimidinic) lyase activity and introduces nicks in the DNA strand. Cleaves the DNA backbone by beta-delta elimination to generate a single-strand break at the site of the removed base with both 3'- and 5'-phosphates. In Ectopseudomonas mendocina (strain ymp) (Pseudomonas mendocina), this protein is Formamidopyrimidine-DNA glycosylase.